We begin with the raw amino-acid sequence, 465 residues long: Lactaldehyde dehydrogenase (465 aa).

Gly-220–Gly-225 is an NAD(+) binding site. Catalysis depends on residues Glu-240 and Cys-274.

Belongs to the aldehyde dehydrogenase family. As to quaternary structure, homotetramer.

The catalysed reaction is (S)-lactaldehyde + NAD(+) + H2O = (S)-lactate + NADH + 2 H(+). Its pathway is cofactor biosynthesis; coenzyme F420 biosynthesis. Involved in F420 biosynthesis through the oxidation of lactaldehyde to lactate. In Methanococcus maripaludis (strain DSM 14266 / JCM 13030 / NBRC 101832 / S2 / LL), this protein is Lactaldehyde dehydrogenase.